A 347-amino-acid chain; its full sequence is Spermatogenesis associated 6-like protein (347 aa).

The tract at residues 115–199 (SKSHGQRVQA…ENNLEHCSKK (85 aa)) is disordered. Polar residues predominate over residues 116–125 (KSHGQRVQAT). Basic residues predominate over residues 153–166 (LHLHRPTQRNHGKS). The span at 170-183 (PGERKPPFVVRHVD) shows a compositional bias: basic and acidic residues. Phosphoserine is present on residues serine 218 and serine 221. The tract at residues 234 to 285 (ERIVLKSQPPPPVDSSESRKPSLSHQGDASLHTETSVTTSQLSRPPSPLNQP) is disordered. Positions 254–277 (PSLSHQGDASLHTETSVTTSQLSR) are enriched in polar residues.

It belongs to the SPATA6 family.

This chain is Spermatogenesis associated 6-like protein (Spata6l), found in Mus musculus (Mouse).